Here is a 439-residue protein sequence, read N- to C-terminus: 3-phosphoshikimate 1-carboxyvinyltransferase (439 aa).

3-phosphoshikimate contacts are provided by K21, S22, and R26. Residue K21 coordinates phosphoenolpyruvate. Phosphoenolpyruvate contacts are provided by G94 and R122. The 3-phosphoshikimate site is built by S167, Q169, D320, and K347. Q169 lines the phosphoenolpyruvate pocket. D320 functions as the Proton acceptor in the catalytic mechanism. Residues R351 and R395 each contribute to the phosphoenolpyruvate site.

This sequence belongs to the EPSP synthase family. Monomer.

The protein resides in the cytoplasm. It catalyses the reaction 3-phosphoshikimate + phosphoenolpyruvate = 5-O-(1-carboxyvinyl)-3-phosphoshikimate + phosphate. Its pathway is metabolic intermediate biosynthesis; chorismate biosynthesis; chorismate from D-erythrose 4-phosphate and phosphoenolpyruvate: step 6/7. In terms of biological role, catalyzes the transfer of the enolpyruvyl moiety of phosphoenolpyruvate (PEP) to the 5-hydroxyl of shikimate-3-phosphate (S3P) to produce enolpyruvyl shikimate-3-phosphate and inorganic phosphate. This chain is 3-phosphoshikimate 1-carboxyvinyltransferase, found in Hyphomonas neptunium (strain ATCC 15444).